The primary structure comprises 203 residues: Guanylate kinase (203 aa).

The 179-residue stretch at 3 to 181 (GTLYIVAAPS…AVSEMCAIFT (179 aa)) folds into the Guanylate kinase-like domain. ATP is bound at residue 10-17 (APSGAGKS).

This sequence belongs to the guanylate kinase family.

It localises to the cytoplasm. It catalyses the reaction GMP + ATP = GDP + ADP. Functionally, essential for recycling GMP and indirectly, cGMP. The polypeptide is Guanylate kinase (Xanthomonas campestris pv. campestris (strain 8004)).